We begin with the raw amino-acid sequence, 146 residues long: MATILVLHGPNLNLLGTREPEIYGATTLADINSTLTEMCIAKGHHLQALQSNAEYELINRIHDAKGEGINFIIINPAAFTHTSVALRDALAAVDIPFIECHLSNVHTREAFRHHSYFSDLAQGVICGFGAQSYELALQAAFAKLDS.

Tyrosine 23 serves as the catalytic Proton acceptor. Residues asparagine 75, histidine 81, and aspartate 88 each contribute to the substrate site. Histidine 101 (proton donor) is an active-site residue. Residues 102–103 and arginine 112 each bind substrate; that span reads LS.

It belongs to the type-II 3-dehydroquinase family. As to quaternary structure, homododecamer.

The catalysed reaction is 3-dehydroquinate = 3-dehydroshikimate + H2O. It participates in metabolic intermediate biosynthesis; chorismate biosynthesis; chorismate from D-erythrose 4-phosphate and phosphoenolpyruvate: step 3/7. Catalyzes a trans-dehydration via an enolate intermediate. The protein is 3-dehydroquinate dehydratase of Saccharophagus degradans (strain 2-40 / ATCC 43961 / DSM 17024).